We begin with the raw amino-acid sequence, 321 residues long: MESNGVPMITLSSGIRMPALGMGTAETMVKGTEREKLAFLKAIEVGYRHFDTAAAYQSEECLGEAIAEALQLGLIKSRDELFITSKLWCADAHADLVLPALQNSLRNLKLEYLDLYLIHHPVSLKPGKFVNEIPKDHILPMDYKTVWAAMEECQTLGFTRAIGVSNFSCKKLQELMAAAKIPPVVNQVEMSPTLHQKNLREYCKANNIMITAHSVLGAIGAPWGSNAVMDSKVLHQIAVARGKSVAQVSMRWVYQQGASLVVKSFNEGRMKENLKIFDWELTAEDMEKISEIPQSRTSSADFLLSPTGPFKTEEEFWDEKD.

The NADPH site is built by Thr27 and Asp51. Active-site proton donor residues include Tyr56 and His119. His119 is a substrate binding site. NADPH is bound by residues Ser165, Gln187, Ser214, Leu216, Ser264, and Arg269. Residues 299 to 321 (SADFLLSPTGPFKTEEEFWDEKD) form a disordered region.

It belongs to the aldo/keto reductase family. Latex secreting cells (laticifer cells). Expressed constitutively in all organs with highest levels in capsules. Restricted to the parietal region of sieve elements adjacent or proximal to laticifers in roots, stems, leaves and carpels.

It is found in the cytoplasm. Its subcellular location is the cytosol. It carries out the reaction codeine + NADP(+) = codeinone + NADPH + H(+). It catalyses the reaction neopine + NADP(+) = neopinone + NADPH + H(+). The catalysed reaction is morphine + NADP(+) = morphinone + NADPH + H(+). The enzyme catalyses neomorphine + NADP(+) = neomorphinone + NADPH + H(+). It functions in the pathway alkaloid biosynthesis; morphine biosynthesis. NADPH-dependent codeinone reductase involved in biosynthesis of morphinan-type benzylisoquinoline and opiate alkaloids natural products. Reduces codeinone to codeine in the penultimate step in morphine biosynthesis. Can use morphinone, hydrocodone and hydromorphone as substrate during reductive reaction with NADPH as cofactor, and morphine and dihydrocodeine as substrate during oxidative reaction with NADP as cofactor. Converts morphinone to morphine, and neomorphinone to neomorphine. Reduces irreversibly neopinone, a spontaneous isomer of codeinone, to neopine; in planta, neopine levels are limited to low levels. The polypeptide is NADPH-dependent codeinone reductase 1-4 (Papaver somniferum (Opium poppy)).